The chain runs to 485 residues: GTPase Der (485 aa).

EngA-type G domains lie at 3–167 and 176–349; these read PTIA…PEPE and PVFA…NAAM. Residues 9–16, 56–60, 119–122, 182–189, 229–233, and 294–297 each bind GTP; these read GRPNVGKS, DTGGF, NKGE, DTAGV, and NKWD. The 85-residue stretch at 350–434 folds into the KH-like domain; sequence IKMPTPKITR…PLRIQYNVSE (85 aa). The disordered stretch occupies residues 435–485; sequence NPYENAEDKPKKKPLRRVSLSNRIEKREGRKEEKNRFKKKTKVSVKKQFSK. Basic and acidic residues predominate over residues 457–469; it reads RIEKREGRKEEKN. The segment covering 470 to 485 has biased composition (basic residues); it reads RFKKKTKVSVKKQFSK.

Belongs to the TRAFAC class TrmE-Era-EngA-EngB-Septin-like GTPase superfamily. EngA (Der) GTPase family. In terms of assembly, associates with the 50S ribosomal subunit.

GTPase that plays an essential role in the late steps of ribosome biogenesis. The polypeptide is GTPase Der (Neisseria meningitidis serogroup B (strain ATCC BAA-335 / MC58)).